A 348-amino-acid polypeptide reads, in one-letter code: Peptidyl-Lys metalloendopeptidase (348 aa).

Residues 1–18 (MFSSVMVALVSLAVAVSA) form the signal peptide. The propeptide occupies 19–181 (NPGLSLKVSG…RATPTLTRPV (163 aa)). 2 disulfide bridges follow: Cys-186–Cys-256 and Cys-258–Cys-278. An O-linked (Man) threonine; partial glycan is attached at Thr-223. Residue His-298 coordinates Zn(2+). Glu-299 is a catalytic residue. Zn(2+) is bound by residues His-302 and Asp-311.

Zn(2+) serves as cofactor.

Its subcellular location is the secreted. The enzyme catalyses Preferential cleavage in proteins: -Xaa-|-Lys- (in which Xaa may be Pro).. Its activity is regulated as follows. Inhibited by chelating agents such as EDTA and 1,10-phenanthroline. This Grifola frondosa (Maitake) protein is Peptidyl-Lys metalloendopeptidase (MEP).